Consider the following 273-residue polypeptide: Proteasome subunit beta type-10 (273 aa).

Met1 is subject to N-acetylmethionine. Positions 1–39 are cleaved as a propeptide — removed in mature form; sequence MLKQAVEHRGGFSFENCQRNASLEHVLPGLRVPLARKTG. The active-site Nucleophile is Thr40. Position 230 is a phosphoserine (Ser230).

The protein belongs to the peptidase T1B family. The 26S proteasome consists of a 20S proteasome core and two 19S regulatory subunits. The 20S proteasome core is composed of 28 subunits that are arranged in four stacked rings, resulting in a barrel-shaped structure. The two end rings are each formed by seven alpha subunits, and the two central rings are each formed by seven beta subunits. The catalytic chamber with the active sites is on the inside of the barrel. Component of the immunoproteasome, where it displaces the equivalent housekeeping subunit PSMB7. Component of the spermatoproteasome, a form of the proteasome specifically found in testis. Autocleaved. The resulting N-terminal Thr residue of the mature subunit is responsible for the nucleophile proteolytic activity.

It is found in the cytoplasm. Its subcellular location is the nucleus. It catalyses the reaction Cleavage of peptide bonds with very broad specificity.. Its function is as follows. The proteasome is a multicatalytic proteinase complex which is characterized by its ability to cleave peptides with Arg, Phe, Tyr, Leu, and Glu adjacent to the leaving group at neutral or slightly basic pH. The proteasome has an ATP-dependent proteolytic activity. This subunit is involved in antigen processing to generate class I binding peptides. The sequence is that of Proteasome subunit beta type-10 (Psmb10) from Rattus norvegicus (Rat).